The following is a 636-amino-acid chain: MIQPGELLRTIHSPEELRKLDETQLIQVSEELRQFIVDNVSVYGGHFAASLGVVELTVALHYVFNTPVDQLVWDVGHQAYGHKILTGRMENFHTNRTYNGLSGFPKRSESPYDTFGVGHSSTSISAALGMAVASQYQKDNRQHIAVIGDGALTGGMAFEAMNHAGVTNSNLLIVLNDNCMAIDPNVGALKDYLVDITTSRTYNRVRDEVWNMLGKISKFGPNAQAIASKVESGLKASLLKQSNLFESLHIRYFGPVDGHDLNHLVQVLNDLKDIPGPKILHTLTVKGKGYALAEKDQVKWHAPGKFDKVTGQIHVKTYDTPQAPKYQDVFGNTIIELAEKNDKIMGITPAMPSGCSLNLMMEKMPDRAFDVGIAEQHAVTFSAGLATQGLIPFCNIYSTFMQRAYDQVIHDVCIQNLHVIFCLDRAGFAGVDGPTHHGAYDLAFFRCIPNLVVSAPMNEQELRNLMYTAQLQKNKGPFSIRYPRGQGVMPNWKTPFEEITIGKGRKVSDGDDVAILSIGHIGNYVIEAKALLREEELSPAHFDMRFVKPIDEEMLHLVFKKFKKIITVEDGCLMGGFGSAVLEFMADNNYAAQVIRLGIPDRIVEHGEQAELHKECGFDPQSIARTVRNLSGVVLK.

Residues His77 and 118-120 each bind thiamine diphosphate; that span reads GHS. Asp149 lines the Mg(2+) pocket. Thiamine diphosphate-binding positions include 150–151, Asn178, Tyr290, and Glu375; that span reads GA. Asn178 provides a ligand contact to Mg(2+).

This sequence belongs to the transketolase family. DXPS subfamily. As to quaternary structure, homodimer. The cofactor is Mg(2+). Thiamine diphosphate serves as cofactor.

It carries out the reaction D-glyceraldehyde 3-phosphate + pyruvate + H(+) = 1-deoxy-D-xylulose 5-phosphate + CO2. The protein operates within metabolic intermediate biosynthesis; 1-deoxy-D-xylulose 5-phosphate biosynthesis; 1-deoxy-D-xylulose 5-phosphate from D-glyceraldehyde 3-phosphate and pyruvate: step 1/1. Its function is as follows. Catalyzes the acyloin condensation reaction between C atoms 2 and 3 of pyruvate and glyceraldehyde 3-phosphate to yield 1-deoxy-D-xylulose-5-phosphate (DXP). The polypeptide is 1-deoxy-D-xylulose-5-phosphate synthase (Cytophaga hutchinsonii (strain ATCC 33406 / DSM 1761 / CIP 103989 / NBRC 15051 / NCIMB 9469 / D465)).